Consider the following 436-residue polypeptide: Xylose isomerase (436 aa).

Residues His100 and Asp103 contribute to the active site. 7 residues coordinate Mg(2+): Glu231, Glu267, His270, Asp295, Asp306, Asp308, and Asp338.

This sequence belongs to the xylose isomerase family. In terms of assembly, homotetramer. It depends on Mg(2+) as a cofactor.

It localises to the cytoplasm. It carries out the reaction alpha-D-xylose = alpha-D-xylulofuranose. This Agrobacterium fabrum (strain C58 / ATCC 33970) (Agrobacterium tumefaciens (strain C58)) protein is Xylose isomerase.